Here is a 490-residue protein sequence, read N- to C-terminus: MRINPTTSGSEVSAVEKKNLGRIVKIIGPVLDVAFPPGKMPNIYNALVVQGRDNEQTNVTCEVQQLLGNNRVRAVAMSDTDGLMRGMEVIDTGAPISVPVGGSTLGRIFNVLGQPVDNLGPVNTNTTSPIHKSAPAFIQLDTKLSIFETGIKVVDLLPPYRRGGKIGLFGGXGVGKTLLIMELINNIAKAHGGLSVFGGVGERTREGNDLYLEMKESGVINEENIPESKVALVYGQMNEPPGARMRVGLTALTMAEYFRDVNEQDVLLFIDNIFRFVQAGSEVSALLGRMPSAVGYQPTLSTEMGSLQERITSTKEGSITSIQAVYVPADDLTDPAPATTFAHLDATTVLSRGLAAKGIYPAVDPLDSTSTMLQPRIVGEEHYETAQRVKQTLQRYKELQDIIAILGLDELSEEDRLTVARARKIERFLSQPFFVAEVFTGSPGKYVGLAETIRGFQLILSGELDGLPEQAFYLVGNIDEATAKAMNLKT.

170-177 is an ATP binding site; the sequence is GGXGVGKT.

This sequence belongs to the ATPase alpha/beta chains family. F-type ATPases have 2 components, CF(1) - the catalytic core - and CF(0) - the membrane proton channel. CF(1) has five subunits: alpha(3), beta(3), gamma(1), delta(1), epsilon(1). CF(0) has four main subunits: a(1), b(1), b'(1) and c(9-12).

It is found in the plastid. The protein localises to the chloroplast thylakoid membrane. It catalyses the reaction ATP + H2O + 4 H(+)(in) = ADP + phosphate + 5 H(+)(out). Functionally, produces ATP from ADP in the presence of a proton gradient across the membrane. The catalytic sites are hosted primarily by the beta subunits. This Ipomoea coccinea (Scarlet morning-glory) protein is ATP synthase subunit beta, chloroplastic.